The following is a 343-amino-acid chain: Cyclin-Y-like protein 1 (343 aa).

Residues 1–48 form a disordered region; the sequence is MGNTVTCCVSPDASPKAGRDRAVTERGEPYQAQVELQETDPGPHLQHI. Residues 17 to 28 show a composition bias toward basic and acidic residues; it reads AGRDRAVTERGE. The Cyclin N-terminal domain maps to 145–267; it reads EIFDEKLHPL…FLELLQFNIN (123 aa).

Belongs to the cyclin family. Cyclin Y subfamily.

It localises to the cell membrane. Key regulator of Wnt signaling implicated in various biological processes, such as embryonic neurogenesis. In Xenopus tropicalis (Western clawed frog), this protein is Cyclin-Y-like protein 1 (ccnyl1).